The following is a 416-amino-acid chain: Peroxisomal isocitrate dehydrogenase [NADP] (416 aa).

Residues 77–79 (TIT) and Arg84 each bind NADP(+). Thr79 contributes to the substrate binding site. Substrate-binding positions include 96-102 (SPNGTIR), Arg111, and Arg134. Position 253 (Asp253) interacts with Mn(2+). Residue Lys261 coordinates NADP(+). A Mn(2+)-binding site is contributed by Asp276. NADP(+)-binding positions include 311-316 (GTVTRH) and Asn329. Residues 414–416 (SRL) carry the Peroxisomal targeting signal motif.

The protein belongs to the isocitrate and isopropylmalate dehydrogenases family. Mg(2+) serves as cofactor. Mn(2+) is required as a cofactor.

The protein localises to the peroxisome. The catalysed reaction is D-threo-isocitrate + NADP(+) = 2-oxoglutarate + CO2 + NADPH. In terms of biological role, may be involved in response to oxidative stresses. This Arabidopsis thaliana (Mouse-ear cress) protein is Peroxisomal isocitrate dehydrogenase [NADP] (ICDH).